Here is a 366-residue protein sequence, read N- to C-terminus: Histidinol-phosphate aminotransferase (366 aa).

An N6-(pyridoxal phosphate)lysine modification is found at K228.

This sequence belongs to the class-II pyridoxal-phosphate-dependent aminotransferase family. Histidinol-phosphate aminotransferase subfamily. Homodimer. Requires pyridoxal 5'-phosphate as cofactor.

The enzyme catalyses L-histidinol phosphate + 2-oxoglutarate = 3-(imidazol-4-yl)-2-oxopropyl phosphate + L-glutamate. It functions in the pathway amino-acid biosynthesis; L-histidine biosynthesis; L-histidine from 5-phospho-alpha-D-ribose 1-diphosphate: step 7/9. This chain is Histidinol-phosphate aminotransferase, found in Stutzerimonas stutzeri (Pseudomonas stutzeri).